The primary structure comprises 48 residues: MTNKNTGKDIRQNSPKEHQSGQPEPLSGSKKVKNRNHTRQKHNSHHDM.

The segment covering 1 to 19 (MTNKNTGKDIRQNSPKEHQ) has biased composition (basic and acidic residues). Residues 1 to 48 (MTNKNTGKDIRQNSPKEHQSGQPEPLSGSKKVKNRNHTRQKHNSHHDM) are disordered. Basic residues predominate over residues 30-48 (KKVKNRNHTRQKHNSHHDM).

It belongs to the SspP family.

Its subcellular location is the spore core. The chain is Small, acid-soluble spore protein P from Bacillus pumilus (strain SAFR-032).